A 130-amino-acid polypeptide reads, in one-letter code: uncharacterized protein (130 aa).

This is an uncharacterized protein from Treponema pallidum (strain Nichols).